A 503-amino-acid chain; its full sequence is Maturase K (503 aa).

It belongs to the intron maturase 2 family. MatK subfamily.

The protein resides in the plastid. It localises to the chloroplast. In terms of biological role, usually encoded in the trnK tRNA gene intron. Probably assists in splicing its own and other chloroplast group II introns. The protein is Maturase K of Caragana arborescens (Siberian pea tree).